The chain runs to 371 residues: Collectin-46 (371 aa).

The first 20 residues, 1–20, serve as a signal peptide directing secretion; it reads MLLLPLSVLLLLTQPWRSLG. A disordered region spans residues 43 to 215; sequence PEGGLPGRDG…ERGAKGESGL (173 aa). A Collagen-like domain is found at 46–216; the sequence is GLPGRDGQDG…RGAKGESGLA (171 aa). The span at 51–65 shows a compositional bias: basic and acidic residues; it reads DGQDGREGPQGEKGD. Residue Asn90 is glycosylated (N-linked (GlcNAc...) asparagine). The span at 113 to 128 shows a compositional bias: low complexity; the sequence is PAGREGPSGKQGSMGP. Over residues 139-148 the composition is skewed to gly residues; it reads GPKGGMGAPG. The span at 170-191 shows a compositional bias: low complexity; sequence APGSAGVAGPAGAIGPQGPSGA. The segment covering 198–210 has biased composition (basic and acidic residues); that stretch reads KGDRGDPGERGAK. A Cell attachment site motif is present at residues 201–203; that stretch reads RGD. The C-type lectin domain maps to 273–371; the sequence is QLCREAKGQL…SEPLLVICEF (99 aa). Intrachain disulfides connect Cys275-Cys369 and Cys347-Cys361.

Belongs to the SFTPD family. Oligomeric complex of 4 set of homotrimers. Post-translationally, hydroxylated. Highly expressed in thymus and liver.

The protein localises to the secreted. This is Collectin-46 (CL46) from Bos taurus (Bovine).